Reading from the N-terminus, the 460-residue chain is Bifunctional protein GlmU (460 aa).

Positions methionine 1–proline 233 are pyrophosphorylase. UDP-N-acetyl-alpha-D-glucosamine is bound by residues lysine 21, glutamine 76, and glycine 81 to threonine 82. Residue aspartate 105 participates in Mg(2+) binding. UDP-N-acetyl-alpha-D-glucosamine is bound by residues glycine 140, glutamate 158, and asparagine 231. A Mg(2+)-binding site is contributed by asparagine 231. A linker region spans residues leucine 234–alanine 254. The tract at residues glycine 255 to arginine 460 is N-acetyltransferase. Positions 337 and 355 each coordinate UDP-N-acetyl-alpha-D-glucosamine. Residue histidine 367 is the Proton acceptor of the active site. The UDP-N-acetyl-alpha-D-glucosamine site is built by tyrosine 370 and asparagine 381. Acetyl-CoA contacts are provided by residues alanine 384, asparagine 390–tyrosine 391, serine 409, glycine 427, and arginine 444.

The protein in the N-terminal section; belongs to the N-acetylglucosamine-1-phosphate uridyltransferase family. It in the C-terminal section; belongs to the transferase hexapeptide repeat family. As to quaternary structure, homotrimer. Mg(2+) is required as a cofactor.

The protein localises to the cytoplasm. The enzyme catalyses alpha-D-glucosamine 1-phosphate + acetyl-CoA = N-acetyl-alpha-D-glucosamine 1-phosphate + CoA + H(+). It carries out the reaction N-acetyl-alpha-D-glucosamine 1-phosphate + UTP + H(+) = UDP-N-acetyl-alpha-D-glucosamine + diphosphate. The protein operates within nucleotide-sugar biosynthesis; UDP-N-acetyl-alpha-D-glucosamine biosynthesis; N-acetyl-alpha-D-glucosamine 1-phosphate from alpha-D-glucosamine 6-phosphate (route II): step 2/2. It functions in the pathway nucleotide-sugar biosynthesis; UDP-N-acetyl-alpha-D-glucosamine biosynthesis; UDP-N-acetyl-alpha-D-glucosamine from N-acetyl-alpha-D-glucosamine 1-phosphate: step 1/1. Its pathway is bacterial outer membrane biogenesis; LPS lipid A biosynthesis. Its function is as follows. Catalyzes the last two sequential reactions in the de novo biosynthetic pathway for UDP-N-acetylglucosamine (UDP-GlcNAc). The C-terminal domain catalyzes the transfer of acetyl group from acetyl coenzyme A to glucosamine-1-phosphate (GlcN-1-P) to produce N-acetylglucosamine-1-phosphate (GlcNAc-1-P), which is converted into UDP-GlcNAc by the transfer of uridine 5-monophosphate (from uridine 5-triphosphate), a reaction catalyzed by the N-terminal domain. The sequence is that of Bifunctional protein GlmU from Methylibium petroleiphilum (strain ATCC BAA-1232 / LMG 22953 / PM1).